A 204-amino-acid polypeptide reads, in one-letter code: Altered inheritance of mitochondria protein 20 (204 aa).

Residues 6–26 (VAVGTAVGIPIAVGVIIALIF) form a helical membrane-spanning segment.

It belongs to the SKG1 family.

The protein resides in the vacuole membrane. In terms of biological role, involved in cell cycle progression and surviving DNA damage. The chain is Altered inheritance of mitochondria protein 20 (AIM20) from Saccharomyces cerevisiae (strain RM11-1a) (Baker's yeast).